The sequence spans 130 residues: 3-hydroxyisobutyrate dehydrogenase, mitochondrial (130 aa).

NAD(+) is bound by residues 1 to 17, 25 to 26, and N30; these read TPVG…PMAK and LP. Position 43 is an N6-acetyllysine (K43). Position 47 is an N6-acetyllysine; alternate (K47). K47 is modified (N6-succinyllysine; alternate). K101 carries the post-translational modification N6-succinyllysine.

Belongs to the HIBADH-related family. 3-hydroxyisobutyrate dehydrogenase subfamily. Homodimer.

Its subcellular location is the mitochondrion. It carries out the reaction 3-hydroxy-2-methylpropanoate + NAD(+) = 2-methyl-3-oxopropanoate + NADH + H(+). The protein operates within amino-acid degradation; L-valine degradation. The sequence is that of 3-hydroxyisobutyrate dehydrogenase, mitochondrial from Mesocricetus auratus (Golden hamster).